A 391-amino-acid polypeptide reads, in one-letter code: GTPase Obg (391 aa).

One can recognise an Obg domain in the interval 1–159; that stretch reads MKFIDEALIR…RDLLLELMLL (159 aa). The region spanning 160-333 is the OBG-type G domain; it reads ADVGMLGLPN…LTRDIMDFIE (174 aa). GTP is bound by residues 166–173, 191–195, 213–216, 283–286, and 314–316; these read GLPNAGKS, FTTLV, DIPG, NKID, and SAA. The Mg(2+) site is built by Ser173 and Thr193.

This sequence belongs to the TRAFAC class OBG-HflX-like GTPase superfamily. OBG GTPase family. As to quaternary structure, monomer. The cofactor is Mg(2+).

The protein resides in the cytoplasm. An essential GTPase which binds GTP, GDP and possibly (p)ppGpp with moderate affinity, with high nucleotide exchange rates and a fairly low GTP hydrolysis rate. Plays a role in control of the cell cycle, stress response, ribosome biogenesis and in those bacteria that undergo differentiation, in morphogenesis control. This chain is GTPase Obg, found in Haemophilus ducreyi (strain 35000HP / ATCC 700724).